Reading from the N-terminus, the 460-residue chain is UDP-N-acetylmuramate--L-alanine ligase (460 aa).

Position 112–118 (112–118 (GTHGKTT)) interacts with ATP.

It belongs to the MurCDEF family.

It is found in the cytoplasm. It catalyses the reaction UDP-N-acetyl-alpha-D-muramate + L-alanine + ATP = UDP-N-acetyl-alpha-D-muramoyl-L-alanine + ADP + phosphate + H(+). It participates in cell wall biogenesis; peptidoglycan biosynthesis. In terms of biological role, cell wall formation. This chain is UDP-N-acetylmuramate--L-alanine ligase, found in Pelobacter propionicus (strain DSM 2379 / NBRC 103807 / OttBd1).